The sequence spans 390 residues: 5-hydroxytryptamine receptor 1B (390 aa).

Residues 1 to 46 (MEEPGAQCAPPLAAGSQIAVPQANLSAAHSHNCSAEGYIYQDSIAL) lie on the Extracellular side of the membrane. Residues asparagine 24 and asparagine 32 are each glycosylated (N-linked (GlcNAc...) asparagine). Residues 47 to 72 (PWKVLLVLLLALFTLATTLSNAFVVA) form a helical membrane-spanning segment. Residues 73–86 (TVYRTRKLHTPANY) lie on the Cytoplasmic side of the membrane. The chain crosses the membrane as a helical span at residues 87–111 (LIASLAVTDLLVSILVMPISTMYTV). Topologically, residues 112–119 (TGRWTLGQ) are extracellular. A helical membrane pass occupies residues 120 to 145 (VVCDLWLSSDITCCTASIMHLCVIAL). Cysteine 122 and cysteine 199 are oxidised to a cystine. The ergotamine site is built by aspartate 129 and threonine 134. Positions 146–148 (DRY) match the DRY motif; important for ligand-induced conformation changes and signaling motif. Over 146 to 165 (DRYWAITDAVEYSAKRTPKR) the chain is Cytoplasmic. Residues 166 to 184 (AAIMIRLVWVFSICISLPP) form a helical membrane-spanning segment. Residues 185 to 205 (FFWRQAKAEEEVSECLVNTDH) lie on the Extracellular side of the membrane. Position 201 (valine 201) interacts with ergotamine. Residues 206–229 (VLYTVYSTVGAFYLPTLLLIALYG) form a helical membrane-spanning segment. At 230-315 (RIYVEARSRI…AARERKATKT (86 aa)) the chain is on the cytoplasmic side. Residues 260-272 (SPGSTTSVTSINS) are compositionally biased toward polar residues. The segment at 260 to 282 (SPGSTTSVTSINSRAPDVPSESG) is disordered. A helical membrane pass occupies residues 316–337 (LGIILGVFIVCWLPFFIISLVM). Topologically, residues 338–347 (PICKDACWFH) are extracellular. Residues 348–370 (QAIFDFFTWLGYVNSLINPIIYT) form a helical membrane-spanning segment. Positions 365 to 369 (NPIIY) match the NPxxY motif; important for ligand-induced conformation changes and signaling motif. Over 371 to 390 (MSNEDFKQAFHKLIRFKCTS) the chain is Cytoplasmic. A lipid anchor (S-palmitoyl cysteine) is attached at cysteine 388.

Belongs to the G-protein coupled receptor 1 family. As to quaternary structure, homodimer. Heterodimer with HTR1D. In terms of processing, phosphorylated. Desensitization of the receptor may be mediated by its phosphorylation. Post-translationally, palmitoylated.

The protein resides in the cell membrane. In terms of biological role, G-protein coupled receptor for 5-hydroxytryptamine (serotonin). Also functions as a receptor for ergot alkaloid derivatives, various anxiolytic and antidepressant drugs and other psychoactive substances, such as lysergic acid diethylamide (LSD). Ligand binding causes a conformation change that triggers signaling via guanine nucleotide-binding proteins (G proteins) and modulates the activity of downstream effectors, such as adenylate cyclase. HTR1B is coupled to G(i)/G(o) G alpha proteins and mediates inhibitory neurotransmission by inhibiting adenylate cyclase activity. Arrestin family members inhibit signaling via G proteins and mediate activation of alternative signaling pathways. Regulates the release of 5-hydroxytryptamine, dopamine and acetylcholine in the brain, and thereby affects neural activity, nociceptive processing, pain perception, mood and behavior. Besides, plays a role in vasoconstriction of cerebral arteries. The protein is 5-hydroxytryptamine receptor 1B (HTR1B) of Oryctolagus cuniculus (Rabbit).